A 337-amino-acid chain; its full sequence is Serpentine receptor class delta-50 (337 aa).

The next 7 membrane-spanning stretches (helical) occupy residues 10-30 (VLILTIFYNAYFLLAISSQLL), 48-68 (IYLFNILGLQFISTFSAFVLQ), 107-127 (VLFHILQTSLIACATALIIAF), 147-167 (QLVISYCVPLVFLICEVLSPN), 202-222 (SSQTLMLMIGLYGTPFIALVF), 250-270 (GLTLQTLLPLICYCPGFTYYI), and 280-300 (LFVEFAVSPYGFVYTIFDPLL).

The protein belongs to the nematode receptor-like protein srd family.

Its subcellular location is the membrane. In Caenorhabditis elegans, this protein is Serpentine receptor class delta-50.